The sequence spans 960 residues: Phosphoenolpyruvate carboxylase 2 (960 aa).

Active-site residues include His-167 and Lys-595.

The protein belongs to the PEPCase type 1 family. As to quaternary structure, homotetramer. The cofactor is Mg(2+).

Its subcellular location is the cytoplasm. It catalyses the reaction oxaloacetate + phosphate = phosphoenolpyruvate + hydrogencarbonate. It functions in the pathway photosynthesis; C3 acid pathway. Functionally, through the carboxylation of phosphoenolpyruvate (PEP) it forms oxaloacetate, a four-carbon dicarboxylic acid source for the tricarboxylic acid cycle. In Sorghum bicolor (Sorghum), this protein is Phosphoenolpyruvate carboxylase 2.